The sequence spans 301 residues: Acetylglutamate kinase (301 aa).

Substrate is bound by residues 72–73 (GG), arginine 94, and asparagine 199.

This sequence belongs to the acetylglutamate kinase family. ArgB subfamily.

The protein localises to the cytoplasm. It catalyses the reaction N-acetyl-L-glutamate + ATP = N-acetyl-L-glutamyl 5-phosphate + ADP. Its pathway is amino-acid biosynthesis; L-arginine biosynthesis; N(2)-acetyl-L-ornithine from L-glutamate: step 2/4. Catalyzes the ATP-dependent phosphorylation of N-acetyl-L-glutamate. The chain is Acetylglutamate kinase from Bartonella bacilliformis (strain ATCC 35685 / KC583 / Herrer 020/F12,63).